The following is a 537-amino-acid chain: tRNA(His) guanylyltransferase 2 (537 aa).

Mg(2+)-binding residues include Asp307, Gly308, and Asp354. GTP-binding positions include 307-312 and 353-354; these read DGCHFH and SD.

Belongs to the tRNA(His) guanylyltransferase family. The cofactor is Mg(2+).

It is found in the nucleus. The protein localises to the nucleoplasm. The catalysed reaction is a 5'-end ribonucleotide-tRNA(His) + GTP + ATP + H2O = a 5'-end phospho-guanosine-ribonucleotide-tRNA(His) + AMP + 2 diphosphate + H(+). Adds a GMP to the 5'-end of tRNA(His) after transcription and RNase P cleavage. The chain is tRNA(His) guanylyltransferase 2 (THG2) from Arabidopsis thaliana (Mouse-ear cress).